A 113-amino-acid chain; its full sequence is Hydrogenase maturation factor HypA (113 aa).

His-2 contacts Ni(2+). The Zn(2+) site is built by Cys-73, Cys-76, Cys-89, and Cys-92.

It belongs to the HypA/HybF family.

In terms of biological role, involved in the maturation of [NiFe] hydrogenases. Required for nickel insertion into the metal center of the hydrogenase. The protein is Hydrogenase maturation factor HypA of Azotobacter vinelandii.